Consider the following 54-residue polypeptide: Large ribosomal subunit protein bL33 (54 aa).

This sequence belongs to the bacterial ribosomal protein bL33 family.

In Corynebacterium jeikeium (strain K411), this protein is Large ribosomal subunit protein bL33.